The sequence spans 126 residues: Nascent polypeptide-associated complex protein (126 aa).

The 68-residue stretch at 10 to 77 folds into the NAC-A/B domain; the sequence is PRMMKQMQKM…AKKVAKAEEK (68 aa).

This sequence belongs to the NAC-alpha family. Homodimer. Interacts with the ribosome. Binds ribosomal RNA.

Functionally, contacts the emerging nascent chain on the ribosome. In Methanococcus maripaludis (strain C6 / ATCC BAA-1332), this protein is Nascent polypeptide-associated complex protein.